The chain runs to 349 residues: Phenylalanine--tRNA ligase alpha subunit (349 aa).

Mg(2+) is bound at residue Glu258.

Belongs to the class-II aminoacyl-tRNA synthetase family. Phe-tRNA synthetase alpha subunit type 1 subfamily. As to quaternary structure, tetramer of two alpha and two beta subunits. It depends on Mg(2+) as a cofactor.

The protein localises to the cytoplasm. The enzyme catalyses tRNA(Phe) + L-phenylalanine + ATP = L-phenylalanyl-tRNA(Phe) + AMP + diphosphate + H(+). This chain is Phenylalanine--tRNA ligase alpha subunit, found in Rickettsia bellii (strain RML369-C).